The primary structure comprises 379 residues: Alcohol dehydrogenase class-3 (379 aa).

Residue alanine 2 is modified to N-acetylalanine. Residue cysteine 47 coordinates Zn(2+). An NAD(+)-binding site is contributed by histidine 48. Positions 49 and 69 each coordinate an alcohol. Zn(2+) is bound by residues histidine 69, glutamate 70, cysteine 99, cysteine 102, cysteine 105, cysteine 113, and cysteine 177. Residues 202–207 (GLGTVG), aspartate 226, lysine 231, isoleucine 272, 295–297 (VGV), 320–322 (TAF), and arginine 372 each bind NAD(+).

It belongs to the zinc-containing alcohol dehydrogenase family. Class-III subfamily. As to quaternary structure, homodimer. The cofactor is Zn(2+). In terms of tissue distribution, ubiquitous.

It localises to the cytoplasm. It catalyses the reaction a primary alcohol + NAD(+) = an aldehyde + NADH + H(+). The enzyme catalyses a secondary alcohol + NAD(+) = a ketone + NADH + H(+). The catalysed reaction is S-(hydroxymethyl)glutathione + NADP(+) = S-formylglutathione + NADPH + H(+). It carries out the reaction S-(hydroxymethyl)glutathione + NAD(+) = S-formylglutathione + NADH + H(+). It catalyses the reaction S-nitrosoglutathione + NADH + H(+) = S-(hydroxysulfenamide)glutathione + NAD(+). Repressed by thiol-modifying agents N-ethylmaleimide (NEM) and 5,5-dithio-bis-(2-nitrobenzoic acid) (DTNB), as well as by methyl methanethiosulfonate (MMTS) in a dose-dependent manner. Inhibited by hydrogen peroxide H(2)O(2). Its function is as follows. Alcohol dehydrogenase catalyzing the reduction of nitrosoglutathione. Can also use long-chain alcohols including cinnamyl alcohol and geraniol, and, to a lower extent, octanol. Plays a central role in formaldehyde detoxification. Not able to use ethanol (EtOH) as substrate. The chain is Alcohol dehydrogenase class-3 from Arabidopsis thaliana (Mouse-ear cress).